The chain runs to 856 residues: Envelope glycoprotein gp150 (856 aa).

At 1 to 785 (MAEGFAANRQ…WIGNIPQYLK (785 aa)) the chain is on the extracellular side. N-linked (GlcNAc...) asparagine; by host glycans are attached at residues N220, N258, N269, N274, N298, N330, N336, N342, N418, N422, N448, N481, N499, N518, N531, N548, and N551. The interval 616 to 636 (VMLALATVLSIAGAGTGATAI) is fusion peptide. Residues 643 to 693 (HQVLATHQEAIEKVTGALKINNLRLVTLEHQVLVIGLKVEAMEKFLYTAFA) are a coiled coil. The tract at residues 662 to 680 (INNLRLVTLEHQVLVIGLK) is immunosuppression. N-linked (GlcNAc...) asparagine; by host glycosylation is found at N717, N721, N729, and N737. The stretch at 736-772 (YNQTKDLQQKFYEIIMDIEQNNVQGKTGIQQLQKWED) forms a coiled coil. The helical transmembrane segment at 786-806 (GLLGGILGIGLGVLLLILCLP) threads the bilayer. Residues 807 to 856 (TLVDCIRNCIHKILGYTVIAMPEVEGEEIQPQMELRRNGRQCGMSEKEEE) are Cytoplasmic-facing.

As to quaternary structure, the mature envelope protein (Env) consists of a trimer of SU-TM heterodimers attached by noncovalent interactions or by a labile interchain disulfide bond. Specific enzymatic cleavages in vivo yield mature proteins. Envelope glycoproteins are synthesized as an inactive precursor that is N-glycosylated and processed likely by host cell furin or by a furin-like protease in the Golgi to yield the mature SU and TM proteins. The cleavage site between SU and TM requires the minimal sequence [KR]-X-[KR]-R.

The protein resides in the virion membrane. Its subcellular location is the host cell membrane. The surface protein (SU) attaches the virus to the host cell by binding to its receptor. This interaction triggers the refolding of the transmembrane protein (TM) and is thought to activate its fusogenic potential by unmasking its fusion peptide. Fusion occurs at the host cell plasma membrane. In terms of biological role, the transmembrane protein (TM) acts as a class I viral fusion protein. Under the current model, the protein has at least 3 conformational states: pre-fusion native state, pre-hairpin intermediate state, and post-fusion hairpin state. During viral and target cell membrane fusion, the coiled coil regions (heptad repeats) assume a trimer-of-hairpins structure, positioning the fusion peptide in close proximity to the C-terminal region of the ectodomain. The formation of this structure appears to drive apposition and subsequent fusion of viral and target cell membranes. Membranes fusion leads to delivery of the nucleocapsid into the cytoplasm. This is Envelope glycoprotein gp150 (env) from Felidae (cat family).